The following is a 442-amino-acid chain: Putative major teichoic acid biosynthesis protein C (442 aa).

Functionally, unknown. Might be involved in poly(glycerol phosphate) teichoic acid biosynthesis. The polypeptide is Putative major teichoic acid biosynthesis protein C (tagC) (Bacillus subtilis (strain 168)).